Consider the following 824-residue polypeptide: U-box domain-containing protein 24 (824 aa).

Residues 13–92 (GAFEAFVCPL…HEWRARNEEK (80 aa)) form the U-box domain. 9 ARM repeats span residues 133 to 172 (AASK…VLVE), 175 to 214 (DDNK…ELSG), 217 to 258 (PTCE…NLDR), 260 to 299 (DANV…ELAL), 300 to 339 (ANDD…EISS), 341 to 385 (EASA…NLVA), 396 to 435 (DDDE…PAIG), 441 to 481 (VLAG…DIRV), and 486 to 525 (LLRN…EEQA).

In terms of assembly, interacts with BZR1, BZR2, BZR3 and GSK2. Auto-ubiquitinated. In terms of processing, phosphorylated by GSK2. Phosphorylation of PUB24 increases its cellular stability.

The protein resides in the cytoplasm. The protein localises to the cytosol. It is found in the nucleus. It catalyses the reaction S-ubiquitinyl-[E2 ubiquitin-conjugating enzyme]-L-cysteine + [acceptor protein]-L-lysine = [E2 ubiquitin-conjugating enzyme]-L-cysteine + N(6)-ubiquitinyl-[acceptor protein]-L-lysine.. It participates in protein modification; protein ubiquitination. Functionally, E3 ubiquitin-protein ligase that functions as a negative regulator of brassinosteroid (BR) signaling. Targets BZR1, a positive regulator of BR signaling pathway, and promotes its degradation via the ubiquitin-26S proteasome pathway. The chain is U-box domain-containing protein 24 from Oryza sativa subsp. japonica (Rice).